The chain runs to 292 residues: Sulfofructosephosphate aldolase (292 aa).

The Schiff-base intermediate with substrate role is filled by lysine 193.

The protein belongs to the aldolase LacD family. As to quaternary structure, homotetramer.

The enzyme catalyses 6-deoxy-6-sulfo-D-fructose 1-phosphate = (2S)-3-sulfolactaldehyde + dihydroxyacetone phosphate. In terms of biological role, cleaves 6-deoxy-6-sulfo-D-fructose 1-phosphate (SFP) to form dihydroxyacetone phosphate (DHAP) and 3-sulfolactaldehyde (SLA). The protein is Sulfofructosephosphate aldolase (yihT) of Salmonella typhi.